Reading from the N-terminus, the 119-residue chain is MKKSYRVKREKDFQAIFKLGQSMANRKFVIYHLKGEHKHFRAGISVGKKLGNAVTRNAVKRKIRHVLMELGDHLKSEDFVVIARRGAEELDYQAVKQNLHHVLKLAKLLEEGFEIEKKS.

Belongs to the RnpA family. Consists of a catalytic RNA component (M1 or rnpB) and a protein subunit.

The enzyme catalyses Endonucleolytic cleavage of RNA, removing 5'-extranucleotides from tRNA precursor.. In terms of biological role, RNaseP catalyzes the removal of the 5'-leader sequence from pre-tRNA to produce the mature 5'-terminus. It can also cleave other RNA substrates such as 4.5S RNA. The protein component plays an auxiliary but essential role in vivo by binding to the 5'-leader sequence and broadening the substrate specificity of the ribozyme. The polypeptide is Ribonuclease P protein component (Streptococcus equi subsp. equi (strain 4047)).